A 209-amino-acid chain; its full sequence is Elongation factor Ts, chloroplastic (209 aa).

This sequence belongs to the EF-Ts family.

It is found in the plastid. The protein resides in the chloroplast. Functionally, associates with the EF-Tu.GDP complex and induces the exchange of GDP to GTP. It remains bound to the aminoacyl-tRNA.EF-Tu.GTP complex up to the GTP hydrolysis stage on the ribosome. This Cyanidioschyzon merolae (strain NIES-3377 / 10D) (Unicellular red alga) protein is Elongation factor Ts, chloroplastic (tsf).